Reading from the N-terminus, the 473-residue chain is Rop guanine nucleotide exchange factor 3 (473 aa).

Residues 1–28 (MENLSNPDENDDHQSPRSIDQNDQSAVE) form a disordered region. Residues 16–28 (PRSIDQNDQSAVE) are compositionally biased toward polar residues. The PRONE domain occupies 95–473 (LVVQEISEPE…YVDKTMRGSE (379 aa)).

Functionally, guanine-nucleotide exchange factor (GEF) that acts as an activator of Rop (Rho of plants) GTPases by promoting the exchange of GDP for GTP. The protein is Rop guanine nucleotide exchange factor 3 (ROPGEF3) of Arabidopsis thaliana (Mouse-ear cress).